We begin with the raw amino-acid sequence, 353 residues long: L-tryptophan dehydrogenase (353 aa).

Residue Arg-44 participates in NAD(+) binding. Residue Lys-80 is the Proton donor/acceptor of the active site. Residues Asp-114, Thr-146, 176–181 (GLGNVG), Lys-204, and 255–257 (AAN) contribute to the NAD(+) site.

It belongs to the Glu/Leu/Phe/Val dehydrogenases family. Homodimer.

The catalysed reaction is L-tryptophan + NAD(+) + H2O = indole-3-pyruvate + NH4(+) + NADH + H(+). Catalyzes the reversible oxidative deamination of L-tryptophan to indole-3-pyruvate in the presence of NAD(+). Cannot use other L-amino acids and D-Trp. Involved in the biosynthesis of scytonemin, a cyanobacterial radiation-absorbing pigment. The protein is L-tryptophan dehydrogenase of Nostoc punctiforme (strain ATCC 29133 / PCC 73102).